A 661-amino-acid chain; its full sequence is UvrABC system protein B (661 aa).

The Helicase ATP-binding domain occupies 25–182 (KGLNNKKRSQ…NDLVNLQYER (158 aa)). 38-45 (GITGSGKT) is an ATP binding site. Positions 91-114 (YYDYYQPEAYIPKTDVFIEKDSSI) match the Beta-hairpin motif. In terms of domain architecture, Helicase C-terminal spans 430–592 (QVEDLVGEIQ…IIPKTINRTI (163 aa)). One can recognise a UVR domain in the interval 621–656 (KAHIDKLRKEMLKAASNLEFEQAAKLRDQLKTLEEA).

This sequence belongs to the UvrB family. In terms of assembly, forms a heterotetramer with UvrA during the search for lesions. Interacts with UvrC in an incision complex.

Its subcellular location is the cytoplasm. The UvrABC repair system catalyzes the recognition and processing of DNA lesions. A damage recognition complex composed of 2 UvrA and 2 UvrB subunits scans DNA for abnormalities. Upon binding of the UvrA(2)B(2) complex to a putative damaged site, the DNA wraps around one UvrB monomer. DNA wrap is dependent on ATP binding by UvrB and probably causes local melting of the DNA helix, facilitating insertion of UvrB beta-hairpin between the DNA strands. Then UvrB probes one DNA strand for the presence of a lesion. If a lesion is found the UvrA subunits dissociate and the UvrB-DNA preincision complex is formed. This complex is subsequently bound by UvrC and the second UvrB is released. If no lesion is found, the DNA wraps around the other UvrB subunit that will check the other stand for damage. This chain is UvrABC system protein B, found in Rickettsia bellii (strain OSU 85-389).